The sequence spans 180 residues: ATP-dependent protease subunit HslV (180 aa).

Thr-7 is an active-site residue. Residues Gly-165, Cys-168, and Thr-171 each coordinate Na(+).

It belongs to the peptidase T1B family. HslV subfamily. A double ring-shaped homohexamer of HslV is capped on each side by a ring-shaped HslU homohexamer. The assembly of the HslU/HslV complex is dependent on binding of ATP.

Its subcellular location is the cytoplasm. The enzyme catalyses ATP-dependent cleavage of peptide bonds with broad specificity.. Its activity is regulated as follows. Allosterically activated by HslU binding. In terms of biological role, protease subunit of a proteasome-like degradation complex believed to be a general protein degrading machinery. The chain is ATP-dependent protease subunit HslV from Bacillus cytotoxicus (strain DSM 22905 / CIP 110041 / 391-98 / NVH 391-98).